The following is a 145-amino-acid chain: Basic phospholipase A2 cPm05 (145 aa).

Positions 1 to 21 (MYPAHLLVLLAVCISLLGASA) are cleaved as a signal peptide. The propeptide occupies 22-27 (IPPLPL). 7 disulfide bridges follow: Cys38–Cys98, Cys54–Cys144, Cys56–Cys72, Cys71–Cys125, Cys78–Cys118, Cys87–Cys111, and Cys105–Cys116. Positions 55, 57, and 59 each coordinate Ca(2+). His75 is a catalytic residue. Asp76 serves as a coordination point for Ca(2+). Residue Asp119 is part of the active site.

The protein belongs to the phospholipase A2 family. Group I subfamily. D49 sub-subfamily. Ca(2+) is required as a cofactor. As to expression, expressed by the venom gland.

It is found in the secreted. It carries out the reaction a 1,2-diacyl-sn-glycero-3-phosphocholine + H2O = a 1-acyl-sn-glycero-3-phosphocholine + a fatty acid + H(+). PLA2 catalyzes the calcium-dependent hydrolysis of the 2-acyl groups in 3-sn-phosphoglycerides. In Laticauda semifasciata (Black-banded sea krait), this protein is Basic phospholipase A2 cPm05.